Reading from the N-terminus, the 111-residue chain is Iron-sulfur cluster insertion protein ErpA (111 aa).

Residues cysteine 39, cysteine 103, and cysteine 105 each coordinate iron-sulfur cluster.

Belongs to the HesB/IscA family. In terms of assembly, homodimer. Requires iron-sulfur cluster as cofactor.

Required for insertion of 4Fe-4S clusters for at least IspG. This chain is Iron-sulfur cluster insertion protein ErpA, found in Acinetobacter baumannii (strain SDF).